The sequence spans 241 residues: Phosphoadenosine 5'-phosphosulfate reductase (241 aa).

Cys-235 (nucleophile; cysteine thiosulfonate intermediate) is an active-site residue.

It belongs to the PAPS reductase family. CysH subfamily.

The protein localises to the cytoplasm. The catalysed reaction is [thioredoxin]-disulfide + sulfite + adenosine 3',5'-bisphosphate + 2 H(+) = [thioredoxin]-dithiol + 3'-phosphoadenylyl sulfate. The protein operates within sulfur metabolism; hydrogen sulfide biosynthesis; sulfite from sulfate: step 3/3. Functionally, catalyzes the formation of sulfite from phosphoadenosine 5'-phosphosulfate (PAPS) using thioredoxin as an electron donor. The protein is Phosphoadenosine 5'-phosphosulfate reductase of Xanthomonas oryzae pv. oryzae (strain MAFF 311018).